The chain runs to 388 residues: Alanine racemase (388 aa).

The active-site Proton acceptor; specific for D-alanine is the Lys-40. Residue Lys-40 is modified to N6-(pyridoxal phosphate)lysine. Residue Arg-137 participates in substrate binding. The Proton acceptor; specific for L-alanine role is filled by Tyr-269. Residue Met-318 participates in substrate binding.

The protein belongs to the alanine racemase family. The cofactor is pyridoxal 5'-phosphate.

It carries out the reaction L-alanine = D-alanine. Its pathway is amino-acid biosynthesis; D-alanine biosynthesis; D-alanine from L-alanine: step 1/1. In terms of biological role, catalyzes the interconversion of L-alanine and D-alanine. May also act on other amino acids. The chain is Alanine racemase (alr) from Halalkalibacterium halodurans (strain ATCC BAA-125 / DSM 18197 / FERM 7344 / JCM 9153 / C-125) (Bacillus halodurans).